Reading from the N-terminus, the 128-residue chain is Holo-[acyl-carrier-protein] synthase (128 aa).

Mg(2+)-binding residues include Asp-8 and Glu-58.

Belongs to the P-Pant transferase superfamily. AcpS family. Mg(2+) is required as a cofactor.

It is found in the cytoplasm. It carries out the reaction apo-[ACP] + CoA = holo-[ACP] + adenosine 3',5'-bisphosphate + H(+). Transfers the 4'-phosphopantetheine moiety from coenzyme A to a Ser of acyl-carrier-protein. The chain is Holo-[acyl-carrier-protein] synthase from Exiguobacterium sibiricum (strain DSM 17290 / CCUG 55495 / CIP 109462 / JCM 13490 / 255-15).